Consider the following 139-residue polypeptide: MDDTDLQILSHLQRNGRLTMVELGKLVGLSSPSAAERVRKLEDKGVITGYSANICYEKLNKHVTAFILMEPKSCKHYAAFATSHPDVAENHRITGMYSYVTKVVTESVHTLEDFIDTSMAHGKPTTLVVLSSSSCHPAF.

An HTH asnC-type domain is found at 1–62; the sequence is MDDTDLQILS…NICYEKLNKH (62 aa). Residues 20 to 39 constitute a DNA-binding region (H-T-H motif); the sequence is MVELGKLVGLSSPSAAERVR.

This is an uncharacterized protein from Bacillus subtilis (strain 168).